A 390-amino-acid polypeptide reads, in one-letter code: Monomeric sarcosine oxidase (390 aa).

FAD is bound at residue 6 to 36; it reads DVIVVGAGSMGMAAGYQLAKQGVKTLLVDAF. S-8alpha-FAD cysteine is present on cysteine 316.

As to quaternary structure, monomer. The cofactor is FAD.

The protein localises to the cytoplasm. The enzyme catalyses sarcosine + O2 + H2O = formaldehyde + glycine + H2O2. Its activity is regulated as follows. Pyrrole-2-carboxylate is a competitive inhibitor. N-(cyclopropyl)glycine (CPG) is a mechanism-based inhibitor and inactivates the enzyme by covalently modifying the flavin. Functionally, catalyzes the oxidative demethylation of sarcosine. Can also oxidize other secondary amino acids such as N-methyl-L-alanine. This Bacillus sp. (strain B-0618) protein is Monomeric sarcosine oxidase (soxA).